The following is a 262-amino-acid chain: MKPLKILISNDDGVFAEGIRTLATSAASRGHKVTVVCPDQERSATGHGLTLHSPIRAEKADELFGGGIKAWGCTGTPADCVKLALNELLDQKPDLILSGINHGPNLGTDIFCSGTVAAALEGTLDGIPSIAVSVASFQWKNFSFAGKLSLDIAEKAIQQNWPKNLLLNLNIPPCEEKEMGDLVWTRLSIRQYEEQFIRRVDPRGNTYFWMAGEAVTDLQSAGEGPKGWPSDVSQIAICSPSLTPIQPDLFWRGNLDDLPNLI.

Positions 11, 12, 43, and 101 each coordinate a divalent metal cation.

It belongs to the SurE nucleotidase family. It depends on a divalent metal cation as a cofactor.

It is found in the cytoplasm. It catalyses the reaction a ribonucleoside 5'-phosphate + H2O = a ribonucleoside + phosphate. Functionally, nucleotidase that shows phosphatase activity on nucleoside 5'-monophosphates. This chain is 5'-nucleotidase SurE, found in Prochlorococcus marinus (strain NATL1A).